The primary structure comprises 252 residues: Transmembrane ascorbate-dependent reductase CYB561 (252 aa).

Met1 bears the N-acetylmethionine mark. The Cytoplasmic segment spans residues 1-17 (MEGPASPARAPGALPYY). Residues 18-38 (VAFSQLLGLIVVAMTGAWLGM) traverse the membrane as a helical segment. The Cytochrome b561 domain occupies 20–221 (FSQLLGLIVV…FATVILYILT (202 aa)). At 39–52 (YRGGIAWESALQFN) the chain is on the vesicular side. A helical membrane pass occupies residues 53–73 (VHPLCMIIGLVFLQGDALLVY). Heme b contacts are provided by His54, Arg74, and Lys81. Over 74 to 86 (RVFRNEAKRTTKV) the chain is Cytoplasmic. Lys81 and Lys85 together coordinate L-ascorbate. Residues 87–107 (LHGLLHVFAFVIALVGLVAVF) form a helical membrane-spanning segment. Residues His88, 117–120 (DLYS), and His122 each bind heme b. Residues 108 to 125 (EHHRKKGYADLYSLHSWC) are Vesicular-facing. The chain crosses the membrane as a helical span at residues 126 to 146 (GILVFALFFAQWLVGFSFFLF). Residues 147–159 (PGASFSLRSRYRP) are Cytoplasmic-facing. L-ascorbate is bound at residue Arg154. A helical transmembrane segment spans residues 160 to 180 (QHVFFGAAIFLLSVATALLGL). His161 and Glu182 together coordinate heme b. Residues 181 to 199 (KEALLFELGTKYSMFEPEG) lie on the Vesicular side of the membrane. The helical transmembrane segment at 200–220 (VLANVLGLLLATFATVILYIL) threads the bilayer. Residues 221 to 252 (TRADWKRPLQAEEQALSMDFKTLTEGDSPSSQ) are Cytoplasmic-facing. Lys226 is a heme b binding site. Phosphoserine is present on residues Ser248 and Ser250.

The cofactor is heme b. As to expression, expressed in the adrenal medulla and all brain regions, but not in visceral organs.

It localises to the cytoplasmic vesicle. It is found in the secretory vesicle. The protein resides in the chromaffin granule membrane. It catalyses the reaction monodehydro-L-ascorbate radical(out) + L-ascorbate(in) = monodehydro-L-ascorbate radical(in) + L-ascorbate(out). In terms of biological role, transmembrane reductase that uses ascorbate as an electron donor in the cytoplasm and transfers electrons across membranes to reduce monodehydro-L-ascorbate radical in the lumen of secretory vesicles. It is therefore involved the regeneration and homeostasis within secretory vesicles of ascorbate which in turn provides reducing equivalents needed to support the activity of intravesicular enzymes. The sequence is that of Transmembrane ascorbate-dependent reductase CYB561 (CYB561) from Bos taurus (Bovine).